Here is a 718-residue protein sequence, read N- to C-terminus: Gephyrin (718 aa).

Over residues 1–19 (MSNTLTTERNITNSPTAAQ) the composition is skewed to polar residues. A disordered region spans residues 1–26 (MSNTLTTERNITNSPTAAQLNEKESG). Positions 31-176 (EWIVGVLTTS…LPGSVKAIRE (146 aa)) are MPT Mo-transferase. Residues 222–244 (NQNNQNNNNNNNNNNNNNNNNNS) are compositionally biased toward low complexity. Disordered stretches follow at residues 222–266 (NQNN…SSYN) and 344–364 (TGEN…NDDD). Basic residues predominate over residues 245–254 (HNHHHHHHHS). Positions 260-718 (KRGSSYNMTP…KAILIGPINN (459 aa)) are MPT adenylyltransferase.

The protein in the N-terminal section; belongs to the MoaB/Mog family. This sequence in the C-terminal section; belongs to the MoeA family. In terms of assembly, homotrimer, homodimer and homooligomer. Requires Mg(2+) as cofactor.

Its subcellular location is the cell membrane. It localises to the cytoplasm. The protein resides in the cytosol. The protein localises to the cytoskeleton. It catalyses the reaction molybdopterin + ATP + H(+) = adenylyl-molybdopterin + diphosphate. The catalysed reaction is adenylyl-molybdopterin + molybdate = Mo-molybdopterin + AMP + H(+). Its pathway is cofactor biosynthesis; molybdopterin biosynthesis. Functionally, microtubule-associated protein involved in membrane protein-cytoskeleton interactions. Its function is as follows. Also has a catalytic activity and catalyzes two steps in the biosynthesis of the molybdenum cofactor. In the first step, molybdopterin is adenylated. Subsequently, molybdate is inserted into adenylated molybdopterin and AMP is released. The chain is Gephyrin (gphn) from Dictyostelium discoideum (Social amoeba).